The following is a 183-amino-acid chain: Mitochondrial inner membrane protease subunit 2 (183 aa).

Residues 13-35 (AFVSGFFVAVPVTVTVLDRLAYV) traverse the membrane as a helical segment. Catalysis depends on residues serine 42 and lysine 90. Positions 161–183 (SVPPDRRPLLNWDRAAEDKYDDD) are disordered. The span at 164–183 (PDRRPLLNWDRAAEDKYDDD) shows a compositional bias: basic and acidic residues.

The protein belongs to the peptidase S26 family. IMP2 subfamily. Heterodimer of 2 subunits, IMMPL1 and IMMPL2.

The protein resides in the mitochondrion inner membrane. Its function is as follows. Catalyzes the removal of transit peptides required for the targeting of proteins from the mitochondrial matrix, across the inner membrane, into the inter-membrane space. This chain is Mitochondrial inner membrane protease subunit 2 (immp2l), found in Danio rerio (Zebrafish).